The chain runs to 313 residues: UPF0252 protein AF_0384 (313 aa).

It belongs to the UPF0252 family.

In Archaeoglobus fulgidus (strain ATCC 49558 / DSM 4304 / JCM 9628 / NBRC 100126 / VC-16), this protein is UPF0252 protein AF_0384.